Here is a 499-residue protein sequence, read N- to C-terminus: GTPase Der (499 aa).

EngA-type G domains follow at residues 3 to 166 (PVVA…MDEV) and 211 to 384 (IKLA…DCST). GTP contacts are provided by residues 9–16 (GRPNVGKS), 56–60 (DTGGI), 118–121 (NKTD), 217–224 (GRPNVGKS), 264–268 (DTAGV), and 329–332 (NKWD). Positions 385–469 (RRVNTSMLTR…PIRIQFKEGD (85 aa)) constitute a KH-like domain.

Belongs to the TRAFAC class TrmE-Era-EngA-EngB-Septin-like GTPase superfamily. EngA (Der) GTPase family. In terms of assembly, associates with the 50S ribosomal subunit.

In terms of biological role, GTPase that plays an essential role in the late steps of ribosome biogenesis. The polypeptide is GTPase Der (Erwinia tasmaniensis (strain DSM 17950 / CFBP 7177 / CIP 109463 / NCPPB 4357 / Et1/99)).